The primary structure comprises 88 residues: Putative membrane protein insertion efficiency factor (88 aa).

The protein belongs to the UPF0161 family.

It localises to the cell membrane. In terms of biological role, could be involved in insertion of integral membrane proteins into the membrane. This Exiguobacterium sibiricum (strain DSM 17290 / CCUG 55495 / CIP 109462 / JCM 13490 / 255-15) protein is Putative membrane protein insertion efficiency factor.